The primary structure comprises 184 residues: Probable N-acetyltransferase san (184 aa).

In terms of domain architecture, N-acetyltransferase spans 6–155; sequence IELGDVTPHN…DAHVLQKTLR (150 aa). A substrate-binding site is contributed by tyrosine 31. Lysine 47 is modified (N6-acetyllysine; by autocatalysis). Tyrosine 73 is an active-site residue. Methionine 75 is a binding site for substrate. Position 77 to 90 (77 to 90) interacts with acetyl-CoA; the sequence is LGCLSPYRRLGIGT. Residue histidine 112 is part of the active site. 117-126 contributes to the CoA binding site; that stretch reads NNGAIEFYKK. The segment at 138–141 is substrate; it reads YYKR. Low complexity predominate over residues 157–174; sequence TAPNSNSTATSTTANSNS. The tract at residues 157–176 is disordered; the sequence is TAPNSNSTATSTTANSNSRS.

It belongs to the acetyltransferase family. In terms of assembly, component of an acetyltransferase complex, at least composed of san, Ard1 and Nat1. Autoacetylated.

Its subcellular location is the cytoplasm. It catalyses the reaction N-terminal L-methionyl-L-alanyl-[protein] + acetyl-CoA = N-terminal N(alpha)-acetyl-L-methionyl-L-alanyl-[protein] + CoA + H(+). It carries out the reaction N-terminal L-methionyl-L-seryl-[protein] + acetyl-CoA = N-terminal N(alpha)-acetyl-L-methionyl-L-seryl-[protein] + CoA + H(+). The enzyme catalyses N-terminal L-methionyl-L-valyl-[protein] + acetyl-CoA = N-terminal N(alpha)-acetyl-L-methionyl-L-valyl-[protein] + CoA + H(+). The catalysed reaction is N-terminal L-methionyl-L-threonyl-[protein] + acetyl-CoA = N-terminal N(alpha)-acetyl-L-methionyl-L-threonyl-[protein] + CoA + H(+). It catalyses the reaction N-terminal L-methionyl-L-lysyl-[protein] + acetyl-CoA = N-terminal N(alpha)-acetyl-L-methionyl-L-lysyl-[protein] + CoA + H(+). It carries out the reaction N-terminal L-methionyl-L-leucyl-[protein] + acetyl-CoA = N-terminal N(alpha)-acetyl-L-methionyl-L-leucyl-[protein] + CoA + H(+). The enzyme catalyses N-terminal L-methionyl-L-phenylalanyl-[protein] + acetyl-CoA = N-terminal N(alpha)-acetyl-L-methionyl-L-phenylalanyl-[protein] + CoA + H(+). The catalysed reaction is N-terminal L-methionyl-L-tyrosyl-[protein] + acetyl-CoA = N-terminal N(alpha)-acetyl-L-methionyl-L-tyrosyl-[protein] + CoA + H(+). Its function is as follows. N-alpha-acetyltransferase that acetylates the N-terminus of proteins that retain their initiating methionine. Has a broad substrate specificity: able to acetylate the initiator methionine of most peptides. Also displays N-epsilon-acetyltransferase activity by mediating acetylation of the side chain of specific lysines on proteins. Autoacetylates. Required for the establishment of sister chromatid cohesion and couple the processes of cohesion and DNA replication to ensure that only sister chromatids become paired together. Required for the interaction between Scc1/vtd and SMC3, possibly by mediating N-terminal acetylation of Scc1/vtd. (Microbial infection) Required for optimal replication of E.chaffeensis in the immune tissues, hemocytes, and fat body. The chain is Probable N-acetyltransferase san (san) from Drosophila melanogaster (Fruit fly).